The following is a 505-amino-acid chain: Megakaryocyte-associated tyrosine-protein kinase (505 aa).

One can recognise an SH3 domain in the interval A46 to A108. An SH2 domain is found at W120–R209. Positions L233–R481 constitute a Protein kinase domain. ATP-binding positions include I239–V247 and K260. The Proton acceptor role is filled by D350. The disordered stretch occupies residues V483–P505.

Belongs to the protein kinase superfamily. Tyr protein kinase family. CSK subfamily. As to quaternary structure, interacts with KIT. In terms of tissue distribution, most abundant in brain, and to a lesser extent in the spleen, the thymus and the liver. Also found in the T-cell lineage.

It is found in the cytoplasm. The protein resides in the membrane. The catalysed reaction is L-tyrosyl-[protein] + ATP = O-phospho-L-tyrosyl-[protein] + ADP + H(+). Functionally, could play a significant role in the signal transduction of hematopoietic cells. May regulate tyrosine kinase activity of SRC-family members in brain by specifically phosphorylating their C-terminal regulatory tyrosine residue which acts as a negative regulatory site. It may play an inhibitory role in the control of T-cell proliferation. The protein is Megakaryocyte-associated tyrosine-protein kinase (Matk) of Mus musculus (Mouse).